We begin with the raw amino-acid sequence, 334 residues long: GTPase Obg (334 aa).

Positions 1–159 (MRFVDEVVIK…KEVRLELNLL (159 aa)) constitute an Obg domain. The OBG-type G domain maps to 160 to 331 (ADIALLGLPN…LAKKLNEFLH (172 aa)). Residues 166-173 (GLPNAGKS), 191-195 (FTTMY), 212-215 (DIPG), 282-285 (NKID), and 312-314 (SAA) contribute to the GTP site. S173 and T193 together coordinate Mg(2+).

It belongs to the TRAFAC class OBG-HflX-like GTPase superfamily. OBG GTPase family. Monomer. It depends on Mg(2+) as a cofactor.

It localises to the cytoplasm. Functionally, an essential GTPase which binds GTP, GDP and possibly (p)ppGpp with moderate affinity, with high nucleotide exchange rates and a fairly low GTP hydrolysis rate. Plays a role in control of the cell cycle, stress response, ribosome biogenesis and in those bacteria that undergo differentiation, in morphogenesis control. This chain is GTPase Obg, found in Francisella philomiragia subsp. philomiragia (strain ATCC 25017 / CCUG 19701 / FSC 153 / O#319-036).